A 401-amino-acid polypeptide reads, in one-letter code: Argininosuccinate synthase (401 aa).

Residue 8–16 coordinates ATP; it reads AYSGGLDTT. Residue Tyr87 participates in L-citrulline binding. Gly117 provides a ligand contact to ATP. 3 residues coordinate L-aspartate: Thr119, Asn123, and Asp124. Asn123 provides a ligand contact to L-citrulline. Arg127, Ser175, Glu259, and Tyr271 together coordinate L-citrulline.

It belongs to the argininosuccinate synthase family. Type 1 subfamily. In terms of assembly, homotetramer.

The protein resides in the cytoplasm. It catalyses the reaction L-citrulline + L-aspartate + ATP = 2-(N(omega)-L-arginino)succinate + AMP + diphosphate + H(+). The protein operates within amino-acid biosynthesis; L-arginine biosynthesis; L-arginine from L-ornithine and carbamoyl phosphate: step 2/3. The chain is Argininosuccinate synthase from Corynebacterium glutamicum (strain ATCC 13032 / DSM 20300 / JCM 1318 / BCRC 11384 / CCUG 27702 / LMG 3730 / NBRC 12168 / NCIMB 10025 / NRRL B-2784 / 534).